The sequence spans 218 residues: Redox-sensing transcriptional repressor Rex (218 aa).

Residues 18 to 57 constitute a DNA-binding region (H-T-H motif); that stretch reads LYYRFIQSLHASGKQRVSSAELSEAVKVDSATIRRDFSYF. 92–97 serves as a coordination point for NAD(+); the sequence is GVGHLG.

The protein belongs to the transcriptional regulatory Rex family. In terms of assembly, homodimer.

The protein localises to the cytoplasm. Modulates transcription in response to changes in cellular NADH/NAD(+) redox state. The protein is Redox-sensing transcriptional repressor Rex of Exiguobacterium sp. (strain ATCC BAA-1283 / AT1b).